The primary structure comprises 307 residues: Small ribosomal subunit biogenesis GTPase RsgA (307 aa).

A CP-type G domain is found at 85-242 (RQDAWKTKLI…LIDSPGLQEF (158 aa)). GTP contacts are provided by residues 135-138 (NKAD) and 184-192 (GQSGMGKST). Residues Cys266, Cys271, His273, and Cys279 each contribute to the Zn(2+) site.

This sequence belongs to the TRAFAC class YlqF/YawG GTPase family. RsgA subfamily. Monomer. Associates with 30S ribosomal subunit, binds 16S rRNA. Zn(2+) serves as cofactor.

The protein resides in the cytoplasm. In terms of biological role, one of several proteins that assist in the late maturation steps of the functional core of the 30S ribosomal subunit. Helps release RbfA from mature subunits. May play a role in the assembly of ribosomal proteins into the subunit. Circularly permuted GTPase that catalyzes slow GTP hydrolysis, GTPase activity is stimulated by the 30S ribosomal subunit. The chain is Small ribosomal subunit biogenesis GTPase RsgA from Neisseria meningitidis serogroup C (strain 053442).